The chain runs to 500 residues: Probable cytosol aminopeptidase (500 aa).

Mn(2+) is bound by residues lysine 265 and aspartate 270. Lysine 277 is a catalytic residue. Mn(2+) is bound by residues aspartate 288, aspartate 347, and glutamate 349. Arginine 351 is an active-site residue.

Belongs to the peptidase M17 family. Mn(2+) is required as a cofactor.

The protein resides in the cytoplasm. The enzyme catalyses Release of an N-terminal amino acid, Xaa-|-Yaa-, in which Xaa is preferably Leu, but may be other amino acids including Pro although not Arg or Lys, and Yaa may be Pro. Amino acid amides and methyl esters are also readily hydrolyzed, but rates on arylamides are exceedingly low.. The catalysed reaction is Release of an N-terminal amino acid, preferentially leucine, but not glutamic or aspartic acids.. Its function is as follows. Presumably involved in the processing and regular turnover of intracellular proteins. Catalyzes the removal of unsubstituted N-terminal amino acids from various peptides. The polypeptide is Probable cytosol aminopeptidase (Rickettsia peacockii (strain Rustic)).